Consider the following 216-residue polypeptide: 3-isopropylmalate dehydratase small subunit (216 aa).

Belongs to the LeuD family. LeuD type 1 subfamily. As to quaternary structure, heterodimer of LeuC and LeuD.

The catalysed reaction is (2R,3S)-3-isopropylmalate = (2S)-2-isopropylmalate. Its pathway is amino-acid biosynthesis; L-leucine biosynthesis; L-leucine from 3-methyl-2-oxobutanoate: step 2/4. Catalyzes the isomerization between 2-isopropylmalate and 3-isopropylmalate, via the formation of 2-isopropylmaleate. This chain is 3-isopropylmalate dehydratase small subunit, found in Polaromonas sp. (strain JS666 / ATCC BAA-500).